Here is a 134-residue protein sequence, read N- to C-terminus: ATP synthase epsilon chain (134 aa).

This sequence belongs to the ATPase epsilon chain family. As to quaternary structure, F-type ATPases have 2 components, CF(1) - the catalytic core - and CF(0) - the membrane proton channel. CF(1) has five subunits: alpha(3), beta(3), gamma(1), delta(1), epsilon(1). CF(0) has three main subunits: a, b and c.

The protein localises to the cell membrane. Functionally, produces ATP from ADP in the presence of a proton gradient across the membrane. This chain is ATP synthase epsilon chain, found in Pelotomaculum thermopropionicum (strain DSM 13744 / JCM 10971 / SI).